The sequence spans 426 residues: Histidine--tRNA ligase (426 aa).

It belongs to the class-II aminoacyl-tRNA synthetase family. Homodimer.

It localises to the cytoplasm. The enzyme catalyses tRNA(His) + L-histidine + ATP = L-histidyl-tRNA(His) + AMP + diphosphate + H(+). The sequence is that of Histidine--tRNA ligase from Shewanella baltica (strain OS223).